The following is a 680-amino-acid chain: DNA-directed RNA polymerase subunit beta' (680 aa).

Positions 69, 71, 87, and 90 each coordinate Zn(2+). The Mg(2+) site is built by aspartate 489, aspartate 491, and aspartate 493.

Belongs to the RNA polymerase beta' chain family. RpoC1 subfamily. As to quaternary structure, in plastids the minimal PEP RNA polymerase catalytic core is composed of four subunits: alpha, beta, beta', and beta''. When a (nuclear-encoded) sigma factor is associated with the core the holoenzyme is formed, which can initiate transcription. Mg(2+) is required as a cofactor. Requires Zn(2+) as cofactor.

It is found in the plastid. Its subcellular location is the chloroplast. The catalysed reaction is RNA(n) + a ribonucleoside 5'-triphosphate = RNA(n+1) + diphosphate. DNA-dependent RNA polymerase catalyzes the transcription of DNA into RNA using the four ribonucleoside triphosphates as substrates. In Citrus sinensis (Sweet orange), this protein is DNA-directed RNA polymerase subunit beta'.